We begin with the raw amino-acid sequence, 304 residues long: Polyisoprenyl-teichoic acid--peptidoglycan teichoic acid transferase TagU (304 aa).

Residues 1–3 lie on the Cytoplasmic side of the membrane; it reads MKK. Residues 4-24 traverse the membrane as a helical; Signal-anchor for type II membrane protein segment; the sequence is ALIAIGLILGTITVAIIGYGI. The Extracellular segment spans residues 25–304; that stretch reads YLYSSIQNTA…GELKSHLELS (280 aa).

The protein belongs to the LytR/CpsA/Psr (LCP) family.

The protein localises to the cell membrane. It participates in cell wall biogenesis. Functionally, may catalyze the final step in cell wall teichoic acid biosynthesis, the transfer of the anionic cell wall polymers (APs) from their lipid-linked precursor to the cell wall peptidoglycan (PG). The protein is Polyisoprenyl-teichoic acid--peptidoglycan teichoic acid transferase TagU of Halalkalibacterium halodurans (strain ATCC BAA-125 / DSM 18197 / FERM 7344 / JCM 9153 / C-125) (Bacillus halodurans).